A 154-amino-acid polypeptide reads, in one-letter code: uncharacterized protein (154 aa).

Residues Met1 to Ala19 form the signal peptide. ShKT domains follow at residues Cys67 to Cys102 and Cys113 to Cys150. 6 disulfides stabilise this stretch: Cys67-Cys102, Cys75-Cys95, Cys82-Cys99, Cys113-Cys150, Cys120-Cys143, and Cys129-Cys147.

This is an uncharacterized protein from Caenorhabditis elegans.